The chain runs to 68 residues: MIHVPVNANNSELAIRSLKKKMQRELVFRSMKMSRFYEPPSVKRVRKKQESERRHRKERAMRRRMMEE.

The interval 39-68 is disordered; that stretch reads PPSVKRVRKKQESERRHRKERAMRRRMMEE. Basic residues predominate over residues 54–68; sequence RHRKERAMRRRMMEE.

The protein belongs to the bacterial ribosomal protein bS21 family.

This Orientia tsutsugamushi (strain Ikeda) (Rickettsia tsutsugamushi) protein is Small ribosomal subunit protein bS21.